The primary structure comprises 1019 residues: Serine/threonine-protein kinase 31 (1019 aa).

The 60-residue stretch at 78–137 (NLDPNKIYGGLFSEDQCWYRCKVLKIISVEKCLVRYIDYGNTEILNRSDIVEIPLELQFS) folds into the Tudor domain. The stretch at 298–355 (EKIKQDQKLIEENEKLKTEKDALLESYKALELKVEQIAQELQQEKAAAVDLTNHLEYT) forms a coiled coil. Residues 710 to 1019 (IGLLKYMNSG…TRNGEANFDC (310 aa)) enclose the Protein kinase domain. Residues 716 to 724 (MNSGGLLTM) and Lys-737 contribute to the ATP site.

This sequence belongs to the protein kinase superfamily. Ser/Thr protein kinase family. As to expression, testis specific.

It carries out the reaction L-seryl-[protein] + ATP = O-phospho-L-seryl-[protein] + ADP + H(+). It catalyses the reaction L-threonyl-[protein] + ATP = O-phospho-L-threonyl-[protein] + ADP + H(+). This is Serine/threonine-protein kinase 31 (STK31) from Homo sapiens (Human).